A 179-amino-acid chain; its full sequence is Adaptation to cold protein A (179 aa).

The disordered stretch occupies residues 133-179 (KATPAPKRSADDDFEDEDSDYADYSDDDDDEGEEEDGYYDHYDDEDR). The span at 144–179 (DDFEDEDSDYADYSDDDDDEGEEEDGYYDHYDDEDR) shows a compositional bias: acidic residues.

Functionally, part of an operon involved in cold adaptation. The chain is Adaptation to cold protein A from Shewanella oneidensis (strain ATCC 700550 / JCM 31522 / CIP 106686 / LMG 19005 / NCIMB 14063 / MR-1).